Reading from the N-terminus, the 232-residue chain is Clarin-2 (232 aa).

The chain crosses the membrane as a helical span at residues 10–30 (YGLASLLSFSSFILIIVALVV). Asparagine 48 carries an N-linked (GlcNAc...) asparagine glycan. Transmembrane regions (helical) follow at residues 101–121 (ILLLLFLALALALVSMGFAIL), 139–159 (LWNVLAGGVVALAIASFVAAV), and 188–208 (SFWICVASASAHAANLVVVAI).

It belongs to the clarin family.

It is found in the cell projection. It localises to the stereocilium membrane. Its function is as follows. Plays a key role to hearing function. Required for normal organization and maintenance of the stereocilia bundle and for mechano-electrical transduction. The sequence is that of Clarin-2 from Homo sapiens (Human).